We begin with the raw amino-acid sequence, 550 residues long: Forkhead box protein N4 (550 aa).

Positions Lys-231–Asp-327 form a DNA-binding region, fork-head. The segment covering Leu-402–Ser-411 has biased composition (low complexity). Positions Leu-402–Ala-437 are disordered.

In terms of tissue distribution, isoform 1 is expressed mainly in adult thymus. Isoform 2 is detected in adult skin. Isoform 3 is expressed in adult brain and embryo. Prominent expression sites include the olfactory placode, the basal layer of the olfactory epithelium, the neuroepithelium of the developing retina, the germinal zone of the differentiated eye, regions of motoneuron development in the neural tube and periventricular regions of the brain.

It is found in the nucleus. Transcription factor essential for neural and some non-neural tissues development. Binds to an 11-bp consensus sequence containing the invariant tetranucleotide 5'-ACGC-3'. During development of the central nervous system, required to specify the amacrine and horizontal cell fates from multipotent retinal progenitors while suppressing the alternative photoreceptor cell fates. Drives commitment of p2 progenitors to the V2b interneuron fates during spinal cord neurogenesis. In development of non-neural tissues, plays an essential role in the specification of the atrioventricular canal. This is Forkhead box protein N4 (foxn4) from Danio rerio (Zebrafish).